We begin with the raw amino-acid sequence, 135 residues long: Small ribosomal subunit protein bS16m (135 aa).

A mitochondrion-targeting transit peptide spans 1–34 (MVQLTTIFCKAYHGGHLTIRLALGGCTNRPFYRI).

The protein belongs to the bacterial ribosomal protein bS16 family. Component of the mitochondrial ribosome small subunit (28S) which comprises a 12S rRNA and about 30 distinct proteins.

The protein localises to the mitochondrion. The polypeptide is Small ribosomal subunit protein bS16m (Mrps16) (Mus musculus (Mouse)).